We begin with the raw amino-acid sequence, 328 residues long: WUSCHEL-related homeobox 6 (328 aa).

A compositionally biased stretch (polar residues) spans 1–11 (MEGSSNSPDRQ). A disordered region spans residues 1-45 (MEGSSNSPDRQSSGGSPPEERGGGGSGGGGGRSAAGEPVRSRWTP). Positions 23–33 (GGGSGGGGGRS) are enriched in gly residues. The homeobox; WUS-type DNA-binding region spans 38-102 (PVRSRWTPKP…NRRSRSRRRQ (65 aa)).

This sequence belongs to the WUS homeobox family.

The protein resides in the nucleus. Transcription factor which may be involved in developmental processes. The chain is WUSCHEL-related homeobox 6 (WOX6) from Oryza sativa subsp. indica (Rice).